The primary structure comprises 252 residues: MLAKRIIPCLDVSAGRVVKGVNFVDLRDAGDPVEVARRYDAQGADEITFLDITASSDDRDIILHVVERVAEQVFIPLTVGGGVRSVEDVRRLLNAGADKVSINTAAVNNPSIVAEASGKVGSQCIVVAVDAKQTGPGKWEVFTHGGRNPTGLDAIEWARKVESLGAGEILLTSMDRDGTKIGFDLGLTRAVSDAVGIPVIASGGVGSLEHLADGVSEGRADAVLAASIFHFGQHTVREAKELMRTRGIEVRL.

Residues Asp11 and Asp130 contribute to the active site.

Belongs to the HisA/HisF family. Heterodimer of HisH and HisF.

The protein resides in the cytoplasm. It catalyses the reaction 5-[(5-phospho-1-deoxy-D-ribulos-1-ylimino)methylamino]-1-(5-phospho-beta-D-ribosyl)imidazole-4-carboxamide + L-glutamine = D-erythro-1-(imidazol-4-yl)glycerol 3-phosphate + 5-amino-1-(5-phospho-beta-D-ribosyl)imidazole-4-carboxamide + L-glutamate + H(+). It participates in amino-acid biosynthesis; L-histidine biosynthesis; L-histidine from 5-phospho-alpha-D-ribose 1-diphosphate: step 5/9. Functionally, IGPS catalyzes the conversion of PRFAR and glutamine to IGP, AICAR and glutamate. The HisF subunit catalyzes the cyclization activity that produces IGP and AICAR from PRFAR using the ammonia provided by the HisH subunit. This is Imidazole glycerol phosphate synthase subunit HisF from Azoarcus sp. (strain BH72).